Here is a 336-residue protein sequence, read N- to C-terminus: Phosphonate dehydrogenase (336 aa).

Residues 155-156 (AI), E175, 235-237 (PCR), and D261 each bind NAD(+). Residue R237 is part of the active site. E266 is a catalytic residue. Residue H292 is the Proton donor of the active site. 292-295 (HIGS) serves as a coordination point for NAD(+).

As to quaternary structure, homodimer.

The catalysed reaction is phosphonate + NAD(+) + H2O = phosphate + NADH + H(+). Its activity is regulated as follows. Inhibited by NaCl, NADH and sulfite. In terms of biological role, catalyzes phosphite (phosphonate) oxidation. This chain is Phosphonate dehydrogenase (ptxD), found in Stutzerimonas stutzeri (Pseudomonas stutzeri).